The chain runs to 931 residues: Protein translocase subunit SecA (931 aa).

ATP-binding positions include Q87, 105–109 (GEGKT), and D515. C915, C917, C926, and H927 together coordinate Zn(2+).

The protein belongs to the SecA family. In terms of assembly, monomer and homodimer. Part of the essential Sec protein translocation apparatus which comprises SecA, SecYEG and auxiliary proteins SecDF-YajC and YidC. It depends on Zn(2+) as a cofactor.

The protein resides in the cell inner membrane. It localises to the cytoplasm. It carries out the reaction ATP + H2O + cellular proteinSide 1 = ADP + phosphate + cellular proteinSide 2.. Its function is as follows. Part of the Sec protein translocase complex. Interacts with the SecYEG preprotein conducting channel. Has a central role in coupling the hydrolysis of ATP to the transfer of proteins into and across the cell membrane, serving both as a receptor for the preprotein-SecB complex and as an ATP-driven molecular motor driving the stepwise translocation of polypeptide chains across the membrane. This chain is Protein translocase subunit SecA, found in Burkholderia ambifaria (strain ATCC BAA-244 / DSM 16087 / CCUG 44356 / LMG 19182 / AMMD) (Burkholderia cepacia (strain AMMD)).